The sequence spans 1371 residues: Soluble scavenger receptor cysteine-rich domain-containing protein SSC5D (1371 aa).

The first 16 residues, 1–16 (MRGLACLLAMLVGIQA), serve as a signal peptide directing secretion. Residues 20–120 (LRLADGPHGC…HEEDAGVVCV (101 aa)) form the SRCR 1 domain. 3 disulfides stabilise this stretch: cysteine 45–cysteine 109, cysteine 58–cysteine 119, and cysteine 89–cysteine 99. The span at 143 to 154 (LSGELSPSSEEP) shows a compositional bias: low complexity. The disordered stretch occupies residues 143 to 200 (LSGELSPSSEEPPITHAPQPAASSQNGPRKKNPRPPKQTKSTRAPVLTNGAPHQERLR). 2 SRCR domains span residues 199-299 (LRLV…LVCT) and 305-405 (IRLA…AVCD). 6 disulfide bridges follow: cysteine 224–cysteine 288, cysteine 237–cysteine 298, cysteine 268–cysteine 278, cysteine 330–cysteine 394, cysteine 343–cysteine 404, and cysteine 374–cysteine 384. N-linked (GlcNAc...) asparagine glycosylation is found at asparagine 377 and asparagine 422. Positions 431–466 (TSVGQMPGPAGPWPPSASPTAPPEPGPEAGSPQLRL) are disordered. Pro residues predominate over residues 439 to 456 (PAGPWPPSASPTAPPEPG). The 102-residue stretch at 464–565 (LRLVAGPSRC…HNEDVGVTCT (102 aa)) folds into the SRCR 4 domain. 3 cysteine pairs are disulfide-bonded: cysteine 489–cysteine 554, cysteine 502–cysteine 564, and cysteine 534–cysteine 544. Residues 592 to 756 (WLPGELTTKP…AGVPVPSGPF (165 aa)) are disordered. The segment covering 599-611 (TKPSASLTSSVPQ) has biased composition (polar residues). Over residues 622–633 (KSTKKWVTKNAR) the composition is skewed to basic residues. The segment covering 653–663 (TPTSLHPTART) has biased composition (polar residues). The segment covering 665-676 (ELPKRLTTEAPH) has biased composition (basic and acidic residues). A compositionally biased stretch (polar residues) spans 698 to 740 (PVVSQSTQGPQEVTSEATTTENPQTSLEPSGENTEGSLESSQD). The segment covering 741-755 (PATTPTAGVPVPSGP) has biased composition (low complexity). The 101-residue stretch at 758 to 858 (VRLADGPNRC…HEEDVVLTCT (101 aa)) folds into the SRCR 5 domain. Intrachain disulfides connect cysteine 783–cysteine 847, cysteine 796–cysteine 857, and cysteine 827–cysteine 837. Disordered stretches follow at residues 888-1270 (RPGH…PFGP) and 1351-1371 (STPV…RGDV). The segment covering 894 to 912 (SWATTTNTEVPSPATQNLP) has biased composition (polar residues). Composition is skewed to low complexity over residues 936 to 957 (KGTP…KSPG), 981 to 1004 (PTSA…RQTS), and 1018 to 1035 (GTSS…LPSP). 2 stretches are compositionally biased toward polar residues: residues 1039–1086 (ALST…TSEL) and 1102–1148 (SSDS…NPQQ). Asparagine 1044 and asparagine 1131 each carry an N-linked (GlcNAc...) asparagine glycan. Over residues 1149-1163 (PRSPHPATSPQPPTN) the composition is skewed to pro residues. Polar residues predominate over residues 1164 to 1189 (THPSSTPATPTESLPSSRKTELSSPT). Positions 1218 to 1230 (ASESGPSSPSPAS) are enriched in low complexity. A compositionally biased stretch (polar residues) spans 1244–1261 (RSQTLHSASDHLTQGPTP).

In terms of assembly, interacts with LGALS1 and laminin. In terms of processing, partially N- and O-glycosylated. Detected throughout the gastrointestinal and genitourinary tracts, in serosal salivary gland, the exocrine part of pancreas and testis, as well as in a few tubular structures in kidney. Not detected in lung and heart (at protein level). Strongly expressed in testis, kidney and pancreas, with lower levels detected in bone marrow, spleen, lung, liver, colon, stomach and skeletal muscle. Very low levels or no expression detected in thymus, esophagus, jejunum, ileum, duodenum, ovary, uterus, heart, trachea, brain, cerebellum and bladder.

The protein localises to the secreted. It localises to the cytoplasm. In terms of biological role, binds to extracellular matrix proteins. Binds to pathogen-associated molecular patterns (PAMPs) present on the cell walls of Gram-positive and Gram-negative bacteria and fungi, behaving as a pattern recognition receptor (PRR). Induces bacterial and fungal aggregation and subsequent inhibition of PAMP-induced cytokine release. Does not possess intrinsic bactericidal activity. May play a role in the innate defense and homeostasis of certain epithelial surfaces. The chain is Soluble scavenger receptor cysteine-rich domain-containing protein SSC5D (Ssc5d) from Mus musculus (Mouse).